The sequence spans 417 residues: NADH-quinone oxidoreductase subunit D (417 aa).

This sequence belongs to the complex I 49 kDa subunit family. As to quaternary structure, NDH-1 is composed of 14 different subunits. Subunits NuoB, C, D, E, F, and G constitute the peripheral sector of the complex.

The protein resides in the cell inner membrane. The catalysed reaction is a quinone + NADH + 5 H(+)(in) = a quinol + NAD(+) + 4 H(+)(out). Functionally, NDH-1 shuttles electrons from NADH, via FMN and iron-sulfur (Fe-S) centers, to quinones in the respiratory chain. The immediate electron acceptor for the enzyme in this species is believed to be ubiquinone. Couples the redox reaction to proton translocation (for every two electrons transferred, four hydrogen ions are translocated across the cytoplasmic membrane), and thus conserves the redox energy in a proton gradient. The chain is NADH-quinone oxidoreductase subunit D from Coxiella burnetii (strain RSA 331 / Henzerling II).